Here is a 478-residue protein sequence, read N- to C-terminus: Cytochrome c-552 (478 aa).

An N-terminal signal peptide occupies residues 1–26 (MARKTLRARRFFSLIFPFFFMTSVYA). Residue His-94 participates in heme c binding. Heme contacts are provided by Cys-122, Cys-125, and Lys-126. Positions 160, 163, 164, 209, 212, and 213 each coordinate heme c. Glu-215, Tyr-216, Lys-261, and Gln-263 together coordinate Ca(2+). Tyr-216 is a substrate binding site. Residue His-264 coordinates substrate. Heme c-binding residues include His-275, Cys-282, Cys-285, His-286, His-301, Cys-314, Cys-317, His-318, and His-393.

The protein belongs to the cytochrome c-552 family. It depends on Ca(2+) as a cofactor. Requires heme c as cofactor.

It localises to the periplasm. It carries out the reaction 6 Fe(III)-[cytochrome c] + NH4(+) + 2 H2O = 6 Fe(II)-[cytochrome c] + nitrite + 8 H(+). It functions in the pathway nitrogen metabolism; nitrate reduction (assimilation). Functionally, catalyzes the reduction of nitrite to ammonia, consuming six electrons in the process. This Salmonella arizonae (strain ATCC BAA-731 / CDC346-86 / RSK2980) protein is Cytochrome c-552.